Reading from the N-terminus, the 40-residue chain is Potassium channel toxin alpha-KTx 12.2 (40 aa).

Disulfide bonds link Cys2–Cys5, Cys10–Cys31, Cys16–Cys36, and Cys20–Cys38.

Belongs to the short scorpion toxin superfamily. Potassium channel inhibitor family. Alpha-KTx 12 subfamily. As to expression, expressed by the venom gland.

Its subcellular location is the secreted. In terms of biological role, inhibits high conductance calcium-activated potassium channels. Reversibly inhibits Shaker B potassium channels. The polypeptide is Potassium channel toxin alpha-KTx 12.2 (Tityus trivittatus (Argentinean scorpion)).